Reading from the N-terminus, the 188-residue chain is MEENKQNQNLNTEETTEQQTEAETVEVTEEEVVQADLVEEPAAPDFEAQLAEAKASELRLRADFDNFKRRNRIEAENRAKYSSQTIVEKLLPLVDNLDRALQIESDNEETKSVLAGVEMVKRQLVETLQNEGVIEIPAVGEAFDPNLHQAVVQEPSEEHESGVVTAEFQKGYKLHDRVIRPSMVKVAE.

The segment covering 1–22 has biased composition (low complexity); the sequence is MEENKQNQNLNTEETTEQQTEA. Residues 1–26 are disordered; the sequence is MEENKQNQNLNTEETTEQQTEAETVE.

It belongs to the GrpE family. As to quaternary structure, homodimer.

It is found in the cytoplasm. Its function is as follows. Participates actively in the response to hyperosmotic and heat shock by preventing the aggregation of stress-denatured proteins, in association with DnaK and GrpE. It is the nucleotide exchange factor for DnaK and may function as a thermosensor. Unfolded proteins bind initially to DnaJ; upon interaction with the DnaJ-bound protein, DnaK hydrolyzes its bound ATP, resulting in the formation of a stable complex. GrpE releases ADP from DnaK; ATP binding to DnaK triggers the release of the substrate protein, thus completing the reaction cycle. Several rounds of ATP-dependent interactions between DnaJ, DnaK and GrpE are required for fully efficient folding. The polypeptide is Protein GrpE (Exiguobacterium sibiricum (strain DSM 17290 / CCUG 55495 / CIP 109462 / JCM 13490 / 255-15)).